The following is a 156-amino-acid chain: Beta-defensin 125 (156 aa).

A signal peptide spans 1-20 (MNILMLTFIICGLLTRVTKG). 3 disulfide bridges follow: Cys-27–Cys-55, Cys-35–Cys-49, and Cys-39–Cys-56. Residues 68–156 (PAFPVIHLED…PPSQTALTHN (89 aa)) constitute a propeptide that is removed on maturation. The disordered stretch occupies residues 108–156 (GETMTPETNTPETTMPPSEATTPETTMPPSETATSETMPPPSQTALTHN). The segment covering 109–144 (ETMTPETNTPETTMPPSEATTPETTMPPSETATSET) has biased composition (low complexity).

Belongs to the beta-defensin family.

It localises to the secreted. In terms of biological role, has antibacterial activity. The chain is Beta-defensin 125 (DEFB125) from Homo sapiens (Human).